A 151-amino-acid chain; its full sequence is Phosphoribosyl-AMP cyclohydrolase (151 aa).

A Mg(2+)-binding site is contributed by Asp94. A Zn(2+)-binding site is contributed by Cys95. Residues Asp96 and Asp98 each coordinate Mg(2+). Cys112 and Cys119 together coordinate Zn(2+).

This sequence belongs to the PRA-CH family. Homodimer. It depends on Mg(2+) as a cofactor. The cofactor is Zn(2+).

The protein localises to the cytoplasm. The catalysed reaction is 1-(5-phospho-beta-D-ribosyl)-5'-AMP + H2O = 1-(5-phospho-beta-D-ribosyl)-5-[(5-phospho-beta-D-ribosylamino)methylideneamino]imidazole-4-carboxamide. The protein operates within amino-acid biosynthesis; L-histidine biosynthesis; L-histidine from 5-phospho-alpha-D-ribose 1-diphosphate: step 3/9. In terms of biological role, catalyzes the hydrolysis of the adenine ring of phosphoribosyl-AMP. This chain is Phosphoribosyl-AMP cyclohydrolase, found in Rhodopseudomonas palustris (strain TIE-1).